The following is a 162-amino-acid chain: Crossover junction endodeoxyribonuclease RuvC (162 aa).

Catalysis depends on residues D7, E67, and D140. Residues D7, E67, and D140 each coordinate Mg(2+).

The protein belongs to the RuvC family. As to quaternary structure, homodimer which binds Holliday junction (HJ) DNA. The HJ becomes 2-fold symmetrical on binding to RuvC with unstacked arms; it has a different conformation from HJ DNA in complex with RuvA. In the full resolvosome a probable DNA-RuvA(4)-RuvB(12)-RuvC(2) complex forms which resolves the HJ. Mg(2+) serves as cofactor.

The protein localises to the cytoplasm. The catalysed reaction is Endonucleolytic cleavage at a junction such as a reciprocal single-stranded crossover between two homologous DNA duplexes (Holliday junction).. The RuvA-RuvB-RuvC complex processes Holliday junction (HJ) DNA during genetic recombination and DNA repair. Endonuclease that resolves HJ intermediates. Cleaves cruciform DNA by making single-stranded nicks across the HJ at symmetrical positions within the homologous arms, yielding a 5'-phosphate and a 3'-hydroxyl group; requires a central core of homology in the junction. The consensus cleavage sequence is 5'-(A/T)TT(C/G)-3'. Cleavage occurs on the 3'-side of the TT dinucleotide at the point of strand exchange. HJ branch migration catalyzed by RuvA-RuvB allows RuvC to scan DNA until it finds its consensus sequence, where it cleaves and resolves the cruciform DNA. This is Crossover junction endodeoxyribonuclease RuvC from Pseudothermotoga lettingae (strain ATCC BAA-301 / DSM 14385 / NBRC 107922 / TMO) (Thermotoga lettingae).